A 522-amino-acid chain; its full sequence is Cytochrome P450 4e5, mitochondrial (522 aa).

Glu-307 and Cys-443 together coordinate heme.

It belongs to the cytochrome P450 family. It depends on heme as a cofactor.

It is found in the mitochondrion. Probably involved in steroid hormones biosynthesis. The sequence is that of Cytochrome P450 4e5, mitochondrial (Cyp4e5) from Drosophila mettleri (Fruit fly).